The sequence spans 121 residues: Large ribosomal subunit protein uL14 (121 aa).

The protein belongs to the universal ribosomal protein uL14 family. In terms of assembly, part of the 50S ribosomal subunit. Forms a cluster with proteins L3 and L19. In the 70S ribosome, L14 and L19 interact and together make contacts with the 16S rRNA in bridges B5 and B8.

Functionally, binds to 23S rRNA. Forms part of two intersubunit bridges in the 70S ribosome. The sequence is that of Large ribosomal subunit protein uL14 from Opitutus terrae (strain DSM 11246 / JCM 15787 / PB90-1).